The primary structure comprises 450 residues: Protein DA1-related 3 (450 aa).

Positions 1–46 (MVRRKRQEEDEKIEIERVKEESLKLAKQAEEKRRLEESKEQGKRIQ) form a coiled coil. Basic and acidic residues-rich tracts occupy residues 27-47 (KQAE…RIQV) and 56-69 (TSKD…SKDV). Residues 27–87 (KQAEEKRRLE…PSIDGKSEIG (61 aa)) are disordered.

The protein is Protein DA1-related 3 (DAR3) of Arabidopsis thaliana (Mouse-ear cress).